A 1374-amino-acid chain; its full sequence is DNA-directed RNA polymerase subunit beta (1374 aa).

The protein belongs to the RNA polymerase beta chain family. As to quaternary structure, the RNAP catalytic core consists of 2 alpha, 1 beta, 1 beta' and 1 omega subunit. When a sigma factor is associated with the core the holoenzyme is formed, which can initiate transcription.

It catalyses the reaction RNA(n) + a ribonucleoside 5'-triphosphate = RNA(n+1) + diphosphate. Functionally, DNA-dependent RNA polymerase catalyzes the transcription of DNA into RNA using the four ribonucleoside triphosphates as substrates. The sequence is that of DNA-directed RNA polymerase subunit beta from Rhodopseudomonas palustris (strain TIE-1).